We begin with the raw amino-acid sequence, 408 residues long: Arginine biosynthesis bifunctional protein ArgJ (408 aa).

6 residues coordinate substrate: T156, K182, T193, E279, N403, and T408. T193 acts as the Nucleophile in catalysis.

It belongs to the ArgJ family. In terms of assembly, heterotetramer of two alpha and two beta chains.

Its subcellular location is the cytoplasm. The catalysed reaction is N(2)-acetyl-L-ornithine + L-glutamate = N-acetyl-L-glutamate + L-ornithine. It carries out the reaction L-glutamate + acetyl-CoA = N-acetyl-L-glutamate + CoA + H(+). It participates in amino-acid biosynthesis; L-arginine biosynthesis; L-ornithine and N-acetyl-L-glutamate from L-glutamate and N(2)-acetyl-L-ornithine (cyclic): step 1/1. Its pathway is amino-acid biosynthesis; L-arginine biosynthesis; N(2)-acetyl-L-ornithine from L-glutamate: step 1/4. Its function is as follows. Catalyzes two activities which are involved in the cyclic version of arginine biosynthesis: the synthesis of N-acetylglutamate from glutamate and acetyl-CoA as the acetyl donor, and of ornithine by transacetylation between N(2)-acetylornithine and glutamate. The polypeptide is Arginine biosynthesis bifunctional protein ArgJ (Methylococcus capsulatus (strain ATCC 33009 / NCIMB 11132 / Bath)).